The primary structure comprises 198 residues: Na(+)-translocating NADH-quinone reductase subunit E (198 aa).

Transmembrane regions (helical) follow at residues 11–31, 35–55, 77–97, 110–130, 140–160, and 176–196; these read AVFV…FLAV, VSTA…SVPV, FLNF…LEMI, GIFL…SFMV, VVYG…MAGI, and LGIT…FSGV.

This sequence belongs to the NqrDE/RnfAE family. Composed of six subunits; NqrA, NqrB, NqrC, NqrD, NqrE and NqrF.

Its subcellular location is the cell inner membrane. It carries out the reaction a ubiquinone + n Na(+)(in) + NADH + H(+) = a ubiquinol + n Na(+)(out) + NAD(+). Functionally, NQR complex catalyzes the reduction of ubiquinone-1 to ubiquinol by two successive reactions, coupled with the transport of Na(+) ions from the cytoplasm to the periplasm. NqrA to NqrE are probably involved in the second step, the conversion of ubisemiquinone to ubiquinol. This is Na(+)-translocating NADH-quinone reductase subunit E from Serratia proteamaculans (strain 568).